The chain runs to 260 residues: Tropinone reductase homolog At1g07450 (260 aa).

14–38 is an NADP(+) binding site; that stretch reads LVTGGSKGIGYAIVEELVGFGARVH. Residue Ser147 coordinates substrate. The active-site Proton acceptor is Tyr159.

This sequence belongs to the short-chain dehydrogenases/reductases (SDR) family. SDR65C subfamily.

The chain is Tropinone reductase homolog At1g07450 from Arabidopsis thaliana (Mouse-ear cress).